We begin with the raw amino-acid sequence, 270 residues long: uncharacterized protein (270 aa).

10 helical membrane-spanning segments follow: residues 12–32 (AAIV…RNVG), 35–55 (TLSV…PFCL), 64–84 (TLLG…AAIQ), 88–108 (VAMA…LSVL), 117–137 (TLLA…PYAE), 138–158 (LTFG…VFVL), 171–191 (ITFY…LMFG), 194–214 (GSWL…FVLF), 226–246 (APIL…FYFG), and 248–268 (TLTL…LIAW). 2 EamA domains span residues 19–133 (VLMG…LMLT) and 150–269 (LSYA…IAWR).

It belongs to the EamA transporter family.

The protein localises to the cell membrane. This is an uncharacterized protein from Archaeoglobus fulgidus (strain ATCC 49558 / DSM 4304 / JCM 9628 / NBRC 100126 / VC-16).